A 293-amino-acid chain; its full sequence is NAD-dependent protein deacetylase (293 aa).

One can recognise a Deacetylase sirtuin-type domain in the interval 1 to 284 (MTVAITQTGP…QPPDPLHTAT (284 aa)). NAD(+)-binding positions include 27–47 (GAGCSTDSGIPDYRDLQGGWK) and 105–108 (QNVD). His123 acts as the Proton acceptor in catalysis. Residues Cys131, Cys134, Cys182, and Cys185 each coordinate Zn(2+). NAD(+) is bound by residues 222 to 224 (GSS), 248 to 250 (NFG), and Cys266.

It belongs to the sirtuin family. Class II subfamily. Requires Zn(2+) as cofactor.

The protein localises to the cytoplasm. It catalyses the reaction N(6)-acetyl-L-lysyl-[protein] + NAD(+) + H2O = 2''-O-acetyl-ADP-D-ribose + nicotinamide + L-lysyl-[protein]. Its function is as follows. NAD-dependent protein deacetylase which modulates the activities of several enzymes which are inactive in their acetylated form. This Xanthomonas campestris pv. campestris (strain 8004) protein is NAD-dependent protein deacetylase.